A 750-amino-acid chain; its full sequence is Photosystem I P700 chlorophyll a apoprotein A1 (750 aa).

Helical transmembrane passes span 70 to 93 (VFSA…FHGA), 156 to 179 (LYCT…FHYH), 195 to 219 (LNHH…HVSL), 291 to 309 (IVHH…GHMY), 346 to 369 (WHAQ…HHMY), 385 to 411 (LSLF…IFMV), 433 to 455 (AIIS…LYIH), and 531 to 549 (FLVH…LILL). Positions 573 and 582 each coordinate [4Fe-4S] cluster. Helical transmembrane passes span 589 to 610 (HVFL…HFSW) and 664 to 686 (LSAY…MFLF). Histidine 675 provides a ligand contact to chlorophyll a'. Chlorophyll a-binding residues include methionine 683 and tyrosine 691. Tryptophan 692 contributes to the phylloquinone binding site. The helical transmembrane segment at 724 to 744 (AVGVTHYLLGGIATTWAFFLA) threads the bilayer.

It belongs to the PsaA/PsaB family. In terms of assembly, the PsaA/B heterodimer binds the P700 chlorophyll special pair and subsequent electron acceptors. PSI consists of a core antenna complex that captures photons, and an electron transfer chain that converts photonic excitation into a charge separation. The eukaryotic PSI reaction center is composed of at least 11 subunits. It depends on P700 is a chlorophyll a/chlorophyll a' dimer, A0 is one or more chlorophyll a, A1 is one or both phylloquinones and FX is a shared 4Fe-4S iron-sulfur center. as a cofactor.

The protein localises to the plastid. The protein resides in the chloroplast thylakoid membrane. It catalyses the reaction reduced [plastocyanin] + hnu + oxidized [2Fe-2S]-[ferredoxin] = oxidized [plastocyanin] + reduced [2Fe-2S]-[ferredoxin]. Functionally, psaA and PsaB bind P700, the primary electron donor of photosystem I (PSI), as well as the electron acceptors A0, A1 and FX. PSI is a plastocyanin-ferredoxin oxidoreductase, converting photonic excitation into a charge separation, which transfers an electron from the donor P700 chlorophyll pair to the spectroscopically characterized acceptors A0, A1, FX, FA and FB in turn. Oxidized P700 is reduced on the lumenal side of the thylakoid membrane by plastocyanin. The chain is Photosystem I P700 chlorophyll a apoprotein A1 from Piper cenocladum (Ant piper).